The primary structure comprises 299 residues: Glycine--tRNA ligase alpha subunit (299 aa).

Belongs to the class-II aminoacyl-tRNA synthetase family. As to quaternary structure, tetramer of two alpha and two beta subunits.

It localises to the cytoplasm. It carries out the reaction tRNA(Gly) + glycine + ATP = glycyl-tRNA(Gly) + AMP + diphosphate. This chain is Glycine--tRNA ligase alpha subunit, found in Pediococcus pentosaceus (strain ATCC 25745 / CCUG 21536 / LMG 10740 / 183-1w).